A 99-amino-acid chain; its full sequence is Photosystem II reaction center Psb28 protein (99 aa).

Belongs to the Psb28 family. Part of the photosystem II complex.

It is found in the cell inner membrane. In Gloeobacter violaceus (strain ATCC 29082 / PCC 7421), this protein is Photosystem II reaction center Psb28 protein.